A 456-amino-acid chain; its full sequence is Bifunctional protein GlmU (456 aa).

The pyrophosphorylase stretch occupies residues 1-228 (MPQNTLNTVI…SHLAAGVNNK (228 aa)). UDP-N-acetyl-alpha-D-glucosamine is bound by residues 11–14 (LAAG), lysine 25, glutamine 75, 80–81 (GT), 102–104 (YGD), glycine 138, glutamate 153, asparagine 168, and asparagine 226. Aspartate 104 provides a ligand contact to Mg(2+). Residue asparagine 226 participates in Mg(2+) binding. The interval 229–249 (RQLAELERIFQTEQAQELLKA) is linker. Positions 250 to 456 (GVTLRDPARF…GWMRPEKDKQ (207 aa)) are N-acetyltransferase. 2 residues coordinate UDP-N-acetyl-alpha-D-glucosamine: arginine 332 and lysine 350. Histidine 362 functions as the Proton acceptor in the catalytic mechanism. Residues tyrosine 365 and asparagine 376 each contribute to the UDP-N-acetyl-alpha-D-glucosamine site. Residues alanine 379, 385 to 386 (NY), serine 404, alanine 422, and arginine 439 each bind acetyl-CoA.

It in the N-terminal section; belongs to the N-acetylglucosamine-1-phosphate uridyltransferase family. The protein in the C-terminal section; belongs to the transferase hexapeptide repeat family. Homotrimer. Requires Mg(2+) as cofactor.

It is found in the cytoplasm. It catalyses the reaction alpha-D-glucosamine 1-phosphate + acetyl-CoA = N-acetyl-alpha-D-glucosamine 1-phosphate + CoA + H(+). The catalysed reaction is N-acetyl-alpha-D-glucosamine 1-phosphate + UTP + H(+) = UDP-N-acetyl-alpha-D-glucosamine + diphosphate. The protein operates within nucleotide-sugar biosynthesis; UDP-N-acetyl-alpha-D-glucosamine biosynthesis; N-acetyl-alpha-D-glucosamine 1-phosphate from alpha-D-glucosamine 6-phosphate (route II): step 2/2. Its pathway is nucleotide-sugar biosynthesis; UDP-N-acetyl-alpha-D-glucosamine biosynthesis; UDP-N-acetyl-alpha-D-glucosamine from N-acetyl-alpha-D-glucosamine 1-phosphate: step 1/1. It functions in the pathway bacterial outer membrane biogenesis; LPS lipid A biosynthesis. Catalyzes the last two sequential reactions in the de novo biosynthetic pathway for UDP-N-acetylglucosamine (UDP-GlcNAc). The C-terminal domain catalyzes the transfer of acetyl group from acetyl coenzyme A to glucosamine-1-phosphate (GlcN-1-P) to produce N-acetylglucosamine-1-phosphate (GlcNAc-1-P), which is converted into UDP-GlcNAc by the transfer of uridine 5-monophosphate (from uridine 5-triphosphate), a reaction catalyzed by the N-terminal domain. This Neisseria gonorrhoeae (strain ATCC 700825 / FA 1090) protein is Bifunctional protein GlmU.